We begin with the raw amino-acid sequence, 143 residues long: S-adenosylmethionine decarboxylase proenzyme (143 aa).

The Schiff-base intermediate with substrate; via pyruvic acid role is filled by Ser-66. Ser-66 carries the pyruvic acid (Ser); by autocatalysis modification. His-71 functions as the Proton acceptor; for processing activity in the catalytic mechanism. Residue Cys-86 is the Proton donor; for catalytic activity of the active site.

The protein belongs to the prokaryotic AdoMetDC family. Type 1 subfamily. Heterotetramer of two alpha and two beta chains arranged as a dimer of alpha/beta heterodimers. The cofactor is pyruvate. Is synthesized initially as an inactive proenzyme. Formation of the active enzyme involves a self-maturation process in which the active site pyruvoyl group is generated from an internal serine residue via an autocatalytic post-translational modification. Two non-identical subunits are generated from the proenzyme in this reaction, and the pyruvate is formed at the N-terminus of the alpha chain, which is derived from the carboxyl end of the proenzyme. The post-translation cleavage follows an unusual pathway, termed non-hydrolytic serinolysis, in which the side chain hydroxyl group of the serine supplies its oxygen atom to form the C-terminus of the beta chain, while the remainder of the serine residue undergoes an oxidative deamination to produce ammonia and the pyruvoyl group blocking the N-terminus of the alpha chain.

It carries out the reaction S-adenosyl-L-methionine + H(+) = S-adenosyl 3-(methylsulfanyl)propylamine + CO2. Its pathway is amine and polyamine biosynthesis; S-adenosylmethioninamine biosynthesis; S-adenosylmethioninamine from S-adenosyl-L-methionine: step 1/1. Functionally, catalyzes the decarboxylation of S-adenosylmethionine to S-adenosylmethioninamine (dcAdoMet), the propylamine donor required for the synthesis of the polyamines spermine and spermidine from the diamine putrescine. The protein is S-adenosylmethionine decarboxylase proenzyme of Thermococcus kodakarensis (strain ATCC BAA-918 / JCM 12380 / KOD1) (Pyrococcus kodakaraensis (strain KOD1)).